Here is a 201-residue protein sequence, read N- to C-terminus: Small ribosomal subunit protein uS4 (201 aa).

The segment at 28-47 is disordered; it reads KKNYPPGQHGNSRKRKTSEY. One can recognise an S4 RNA-binding domain in the interval 92–155; the sequence is GRLDNIVFRL…KSLEVIANSL (64 aa).

Belongs to the universal ribosomal protein uS4 family. In terms of assembly, part of the 30S ribosomal subunit. Contacts protein S5. The interaction surface between S4 and S5 is involved in control of translational fidelity.

Functionally, one of the primary rRNA binding proteins, it binds directly to 16S rRNA where it nucleates assembly of the body of the 30S subunit. In terms of biological role, with S5 and S12 plays an important role in translational accuracy. The protein is Small ribosomal subunit protein uS4 of Bacteroides fragilis (strain YCH46).